The primary structure comprises 246 residues: tRNA pseudouridine synthase A (246 aa).

The Nucleophile role is filled by Asp-52. Tyr-110 provides a ligand contact to substrate.

The protein belongs to the tRNA pseudouridine synthase TruA family. As to quaternary structure, homodimer.

The enzyme catalyses uridine(38/39/40) in tRNA = pseudouridine(38/39/40) in tRNA. Formation of pseudouridine at positions 38, 39 and 40 in the anticodon stem and loop of transfer RNAs. The polypeptide is tRNA pseudouridine synthase A (Exiguobacterium sp. (strain ATCC BAA-1283 / AT1b)).